The sequence spans 506 residues: Glycerol kinase (506 aa).

Thr-14 lines the ADP pocket. ATP is bound by residues Thr-14, Thr-15, and Ser-16. Thr-14 lines the sn-glycerol 3-phosphate pocket. Position 18 (Arg-18) interacts with ADP. Positions 84, 85, and 136 each coordinate sn-glycerol 3-phosphate. Arg-84, Glu-85, and Tyr-136 together coordinate glycerol. His-232 carries the post-translational modification Phosphohistidine; by HPr. Sn-glycerol 3-phosphate is bound at residue Asp-246. Residues Asp-246 and Gln-247 each contribute to the glycerol site. Residues Thr-268 and Gly-311 each contribute to the ADP site. Thr-268, Gly-311, Gln-315, and Gly-412 together coordinate ATP. ADP is bound by residues Gly-412 and Asn-416.

It belongs to the FGGY kinase family. Homotetramer and homodimer (in equilibrium). In terms of processing, the phosphoenolpyruvate-dependent sugar phosphotransferase system (PTS), including enzyme I, and histidine-containing protein (HPr) are required for the phosphorylation of His-232, which leads to the activation of the enzyme.

The enzyme catalyses glycerol + ATP = sn-glycerol 3-phosphate + ADP + H(+). Its pathway is polyol metabolism; glycerol degradation via glycerol kinase pathway; sn-glycerol 3-phosphate from glycerol: step 1/1. Activated by phosphorylation and inhibited by fructose 1,6-bisphosphate (FBP). Key enzyme in the regulation of glycerol uptake and metabolism. Catalyzes the phosphorylation of glycerol to yield sn-glycerol 3-phosphate. This is Glycerol kinase from Enterococcus casseliflavus (Enterococcus flavescens).